The primary structure comprises 202 residues: Nucleoside triphosphate pyrophosphatase (202 aa).

D79 functions as the Proton acceptor in the catalytic mechanism.

The protein belongs to the Maf family. A divalent metal cation is required as a cofactor.

The protein localises to the cytoplasm. The enzyme catalyses a ribonucleoside 5'-triphosphate + H2O = a ribonucleoside 5'-phosphate + diphosphate + H(+). The catalysed reaction is a 2'-deoxyribonucleoside 5'-triphosphate + H2O = a 2'-deoxyribonucleoside 5'-phosphate + diphosphate + H(+). In terms of biological role, nucleoside triphosphate pyrophosphatase. May have a dual role in cell division arrest and in preventing the incorporation of modified nucleotides into cellular nucleic acids. The sequence is that of Nucleoside triphosphate pyrophosphatase from Bradyrhizobium diazoefficiens (strain JCM 10833 / BCRC 13528 / IAM 13628 / NBRC 14792 / USDA 110).